The primary structure comprises 485 residues: Glutamyl-tRNA(Gln) amidotransferase subunit A (485 aa).

Active-site charge relay system residues include K79 and S154. S178 functions as the Acyl-ester intermediate in the catalytic mechanism.

The protein belongs to the amidase family. GatA subfamily. As to quaternary structure, heterotrimer of A, B and C subunits.

The catalysed reaction is L-glutamyl-tRNA(Gln) + L-glutamine + ATP + H2O = L-glutaminyl-tRNA(Gln) + L-glutamate + ADP + phosphate + H(+). Functionally, allows the formation of correctly charged Gln-tRNA(Gln) through the transamidation of misacylated Glu-tRNA(Gln) in organisms which lack glutaminyl-tRNA synthetase. The reaction takes place in the presence of glutamine and ATP through an activated gamma-phospho-Glu-tRNA(Gln). This Sulfurihydrogenibium sp. (strain YO3AOP1) protein is Glutamyl-tRNA(Gln) amidotransferase subunit A.